We begin with the raw amino-acid sequence, 93 residues long: MLQLNLQFFASKKGVGSTKNGRDSISKRLGAKRADGQTVSAGSILYRQRGTKIHPGENVGRGGDDTLFAKVDGVVRYERLGRDKKQVSVYPVA.

A propeptide spanning residues 1–9 is cleaved from the precursor; that stretch reads MLQLNLQFF. A disordered region spans residues 14-33; the sequence is GVGSTKNGRDSISKRLGAKR.

Belongs to the bacterial ribosomal protein bL27 family. In terms of processing, the N-terminus is cleaved by ribosomal processing cysteine protease Prp.

This Exiguobacterium sp. (strain ATCC BAA-1283 / AT1b) protein is Large ribosomal subunit protein bL27.